A 204-amino-acid chain; its full sequence is Ancillary SecYEG translocon subunit (204 aa).

At 1 to 23 (MAYTIEEEQELTAIKAWWNENYK) the chain is on the cytoplasmic side. Residues 24 to 44 (FIIVCFVIAFGGVFGWNYWQS) traverse the membrane as a helical segment. The Periplasmic segment spans residues 45–204 (HQIQKMHKAS…QLIQVRLNNL (160 aa)).

It belongs to the YfgM family. As to quaternary structure, interacts with the SecYEG translocon. Forms a complex with PpiD.

The protein resides in the cell inner membrane. Functionally, may mediate protein transfer from the SecYEG translocon to the periplasmic chaperone network via its periplasmic C-terminal region. This is Ancillary SecYEG translocon subunit (1057) from Aggregatibacter actinomycetemcomitans (Actinobacillus actinomycetemcomitans).